A 515-amino-acid chain; its full sequence is Phospholipase A1-Igamma1, chloroplastic (515 aa).

Residues 1–44 constitute a chloroplast transit peptide; the sequence is MATIPSHNLRPHTTNQRTQYSLSFRPHFSRSTLITFPARSSPAR. The GXSXG motif lies at 301–305; it reads GHSLG. Catalysis depends on S303, which acts as the Acyl-ester intermediate. Active-site charge relay system residues include D366 and H422.

It belongs to the AB hydrolase superfamily. Lipase family. In terms of tissue distribution, ubiquitous. Highly expressed in leaves.

It is found in the plastid. Its subcellular location is the chloroplast. It carries out the reaction 1,2-dihexadecanoyl-sn-glycero-3-phosphocholine + H2O = 2-hexadecanoyl-sn-glycero-3-phosphocholine + hexadecanoate + H(+). It catalyses the reaction a 1,2-diacyl-3-O-(beta-D-galactosyl)-sn-glycerol + H2O = an acyl-3-O-(beta-D-galactosyl)-sn-glycerol + a fatty acid + H(+). The enzyme catalyses a 1,2-diacyl-3-O-[alpha-D-galactosyl-(1-&gt;6)-beta-D-galactosyl]-sn-glycerol + H2O = acyl-3-O-[alpha-D-galactosyl-(1-&gt;6)-beta-D-galactosyl]-sn-glycerol + a fatty acid + H(+). In terms of biological role, acylhydrolase with a broad specificity. Catalyzes the hydrolysis of phosphatidylcholine at the sn-1 position. Moderate activity toward phosphatidylcholine (PC), monogalactosyldiacylglycerol (MGDG), digalactosyldiacylglycerol (DGDG) and triacylglycerol (TAG). May display dual sn-1/sn-2 substrate specificity. Could be involved in early wound response. The chain is Phospholipase A1-Igamma1, chloroplastic from Arabidopsis thaliana (Mouse-ear cress).